The following is a 242-amino-acid chain: Uridylate kinase (242 aa).

12 to 15 (KLSG) provides a ligand contact to ATP. Residues 20-25 (GNDGFG) are involved in allosteric activation by GTP. Gly-54 is a binding site for UMP. Positions 55 and 59 each coordinate ATP. Residues Asp-74 and 135 to 142 (TGNPYFST) each bind UMP. Asn-163, Tyr-169, and Asp-172 together coordinate ATP.

This sequence belongs to the UMP kinase family. Homohexamer.

It is found in the cytoplasm. The catalysed reaction is UMP + ATP = UDP + ADP. It functions in the pathway pyrimidine metabolism; CTP biosynthesis via de novo pathway; UDP from UMP (UMPK route): step 1/1. Allosterically activated by GTP. Inhibited by UTP. Its function is as follows. Catalyzes the reversible phosphorylation of UMP to UDP. The protein is Uridylate kinase of Listeria innocua serovar 6a (strain ATCC BAA-680 / CLIP 11262).